Reading from the N-terminus, the 161-residue chain is Nucleotide-binding protein Bmul_0741/BMULJ_02519 (161 aa).

This sequence belongs to the YajQ family.

Nucleotide-binding protein. This is Nucleotide-binding protein Bmul_0741/BMULJ_02519 from Burkholderia multivorans (strain ATCC 17616 / 249).